The primary structure comprises 143 residues: Ribosome-binding factor A (143 aa).

The interval 123-143 is disordered; sequence DKSLQENYKQNDKETKAEKLR.

It belongs to the RbfA family. Monomer. Binds 30S ribosomal subunits, but not 50S ribosomal subunits or 70S ribosomes.

The protein resides in the cytoplasm. In terms of biological role, one of several proteins that assist in the late maturation steps of the functional core of the 30S ribosomal subunit. Associates with free 30S ribosomal subunits (but not with 30S subunits that are part of 70S ribosomes or polysomes). Required for efficient processing of 16S rRNA. May interact with the 5'-terminal helix region of 16S rRNA. The chain is Ribosome-binding factor A from Francisella tularensis subsp. mediasiatica (strain FSC147).